Reading from the N-terminus, the 447-residue chain is NADH-ubiquinone oxidoreductase chain 4 (447 aa).

A run of 13 helical transmembrane segments spans residues 28–48 (IFLA…FCDI), 56–76 (MISY…LMAS), 85–105 (YVNL…FTFS), 110–130 (FMFY…ILGW), 141–161 (IYLL…IFYI), 183–203 (FLYL…LVHL), 213–233 (PVSG…YGLL), 246–266 (FNYI…LICL), 273–293 (ALIA…LMTM), 301–321 (SYTL…LANI), 343–365 (SLSL…LNLL), 380–400 (LTMI…LYLF), and 409–431 (YSGV…LHWL).

This sequence belongs to the complex I subunit 4 family.

It is found in the mitochondrion membrane. The catalysed reaction is a ubiquinone + NADH + 5 H(+)(in) = a ubiquinol + NAD(+) + 4 H(+)(out). Functionally, core subunit of the mitochondrial membrane respiratory chain NADH dehydrogenase (Complex I) that is believed to belong to the minimal assembly required for catalysis. Complex I functions in the transfer of electrons from NADH to the respiratory chain. The immediate electron acceptor for the enzyme is believed to be ubiquinone. This Aedes aegypti (Yellowfever mosquito) protein is NADH-ubiquinone oxidoreductase chain 4.